Here is a 236-residue protein sequence, read N- to C-terminus: Small ribosomal subunit protein uS2c (236 aa).

It belongs to the universal ribosomal protein uS2 family.

It is found in the plastid. This chain is Small ribosomal subunit protein uS2c (rps2), found in Cuscuta gronovii (Common dodder).